Reading from the N-terminus, the 273-residue chain is Large ribosomal subunit protein uL2 (273 aa).

A disordered region spans residues 228-273 (VDHPHGGGEGKTSGGRHPVTPWGFPTKGKKTRKNKRTSKFIVKKRK). The span at 254-273 (KGKKTRKNKRTSKFIVKKRK) shows a compositional bias: basic residues.

Belongs to the universal ribosomal protein uL2 family. In terms of assembly, part of the 50S ribosomal subunit. Forms a bridge to the 30S subunit in the 70S ribosome.

One of the primary rRNA binding proteins. Required for association of the 30S and 50S subunits to form the 70S ribosome, for tRNA binding and peptide bond formation. It has been suggested to have peptidyltransferase activity; this is somewhat controversial. Makes several contacts with the 16S rRNA in the 70S ribosome. The protein is Large ribosomal subunit protein uL2 of Rickettsia africae (strain ESF-5).